The chain runs to 276 residues: Small ribosomal subunit protein uS2 (276 aa).

This sequence belongs to the universal ribosomal protein uS2 family.

This is Small ribosomal subunit protein uS2 from Chlamydia abortus (strain DSM 27085 / S26/3) (Chlamydophila abortus).